The chain runs to 438 residues: GTPase Der (438 aa).

2 EngA-type G domains span residues 4 to 169 (PVVA…PEKG) and 178 to 353 (IDVA…DQNS). GTP contacts are provided by residues 10–17 (GRPNVGKS), 57–61 (DTGGI), 120–123 (NKVD), 184–191 (GKPNVGKS), 231–235 (DTAGL), and 296–299 (NKWD). Residues 354-438 (RRVKTGLLNE…PIRLKFKQKT (85 aa)) enclose the KH-like domain.

Belongs to the TRAFAC class TrmE-Era-EngA-EngB-Septin-like GTPase superfamily. EngA (Der) GTPase family. In terms of assembly, associates with the 50S ribosomal subunit.

GTPase that plays an essential role in the late steps of ribosome biogenesis. The chain is GTPase Der from Halothermothrix orenii (strain H 168 / OCM 544 / DSM 9562).